A 594-amino-acid chain; its full sequence is Neopentalenolactone D synthase (594 aa).

FAD is bound by residues I64 to G65, D86 to K87, T94 to W95, D106 to V107, Y112, V156, and M494.

The protein belongs to the FAD-binding monooxygenase family. Requires FAD as cofactor.

The catalysed reaction is 1-deoxy-11-oxopentalenate + NADPH + O2 + H(+) = neopentalenolactone D + NADP(+) + H2O. It participates in antibiotic biosynthesis; neopentalenolactone biosynthesis. Its function is as follows. Catalyzes the flavin-dependent Baeyer-Villiger oxidation of 1-deoxy-11-oxopentalenic acid to neopentalenolactone D in the biosynthesis of neopentalenolactone antibiotic. The sequence is that of Neopentalenolactone D synthase (ptlE) from Streptomyces avermitilis (strain ATCC 31267 / DSM 46492 / JCM 5070 / NBRC 14893 / NCIMB 12804 / NRRL 8165 / MA-4680).